The chain runs to 140 residues: Putative nickel-responsive regulator (140 aa).

His76, His87, His89, and Cys95 together coordinate Ni(2+).

This sequence belongs to the transcriptional regulatory CopG/NikR family. It depends on Ni(2+) as a cofactor.

Its function is as follows. Transcriptional regulator. The chain is Putative nickel-responsive regulator from Rhodopseudomonas palustris (strain BisB5).